Consider the following 232-residue polypeptide: Lipoprotein-releasing system ATP-binding protein LolD (232 aa).

An ABC transporter domain is found at 11-231 (VYLHDIKRQY…SIEDGVIVEL (221 aa)). Position 47-54 (47-54 (APSGSGKS)) interacts with ATP.

This sequence belongs to the ABC transporter superfamily. Lipoprotein translocase (TC 3.A.1.125) family. The complex is composed of two ATP-binding proteins (LolD) and two transmembrane proteins (LolC and LolE).

The protein resides in the cell inner membrane. In terms of biological role, part of the ABC transporter complex LolCDE involved in the translocation of mature outer membrane-directed lipoproteins, from the inner membrane to the periplasmic chaperone, LolA. Responsible for the formation of the LolA-lipoprotein complex in an ATP-dependent manner. In Rhodopseudomonas palustris (strain BisB5), this protein is Lipoprotein-releasing system ATP-binding protein LolD.